Consider the following 205-residue polypeptide: Glycerol-3-phosphate acyltransferase (205 aa).

The Periplasmic portion of the chain corresponds to 1-3; it reads MSA. The chain crosses the membrane as a helical span at residues 4–24; that stretch reads IAPGMILIAYLCGSISSAILV. The Cytoplasmic portion of the chain corresponds to 25–52; it reads CRLCGLPDPRTSGSGNPGATNVLRIGGK. Residues 53–73 form a helical membrane-spanning segment; that stretch reads GAAVAVLIFDVLKGMLPVWGA. At 74 to 80 the chain is on the periplasmic side; sequence YELGVSP. The helical transmembrane segment at 81-101 threads the bilayer; sequence FWLGLIAIAACLGHIWPVFFG. Residues 102–111 lie on the Cytoplasmic side of the membrane; sequence FKGGKGVATA. Residues 112 to 132 traverse the membrane as a helical segment; sequence FGAIAPIGWDLTGVMAGTWLL. Residues 133-137 are Periplasmic-facing; it reads TVLLS. The chain crosses the membrane as a helical span at residues 138 to 158; sequence GYSSLGAIVSALIAPFYVWWF. Over 159–205 the chain is Cytoplasmic; that stretch reads KPQFTFPVSMLSCLILLRHHDNIQRLWRRQETKIWTKFKRKREKDPE.

Belongs to the PlsY family. As to quaternary structure, probably interacts with PlsX.

The protein localises to the cell inner membrane. The enzyme catalyses sn-glycerol 3-phosphate + an acyl-CoA = a 1-acyl-sn-glycero-3-phosphate + CoA. It carries out the reaction a fatty acyl-[ACP] + sn-glycerol 3-phosphate = a 1-acyl-sn-glycero-3-phosphate + holo-[ACP]. It participates in lipid metabolism; phospholipid metabolism. In terms of biological role, catalyzes the transfer of an acyl group from acyl-ACP to glycerol-3-phosphate (G3P) to form lysophosphatidic acid (LPA). This enzyme can also utilize acyl-CoA as fatty acyl donor, but not acyl-PO(4). This chain is Glycerol-3-phosphate acyltransferase, found in Escherichia coli O8 (strain IAI1).